The chain runs to 719 residues: Fusicoccadiene synthase (719 aa).

The tract at residues 1–334 is fusicocca-2,10(14)-diene synthase; it reads MEFKYSEVVE…RYNPDVSFNK (334 aa). Positions 92 and 96 each coordinate Mg(2+). The geranylgeranyl diphosphate synthase stretch occupies residues 335–719; the sequence is TQLEWMRQGL…MRLLLELLRV (385 aa). A disordered region spans residues 358-404; sequence EIDSDESAVSPTADESDSTEDSLGSGSRQDSSLSTGLSLSPVHSNEG. Residues 378-400 show a composition bias toward polar residues; the sequence is DSLGSGSRQDSSLSTGLSLSPVH. Isopentenyl diphosphate-binding residues include K435, R438, and H467. 2 residues coordinate Mg(2+): D474 and D478. Residue R483 participates in dimethylallyl diphosphate binding. Position 484 (R484) interacts with isopentenyl diphosphate. Positions 561, 562, 602, 609, 619, and 629 each coordinate dimethylallyl diphosphate.

The protein in the N-terminal section; belongs to the terpene synthase family. This sequence in the C-terminal section; belongs to the FPP/GGPP synthase family. In terms of assembly, hexamer.

The catalysed reaction is geranylgeranyl diphosphate = fusicocca-2,10(14)-diene + diphosphate. The enzyme catalyses isopentenyl diphosphate + (2E,6E)-farnesyl diphosphate = (2E,6E,10E)-geranylgeranyl diphosphate + diphosphate. The protein operates within mycotoxin biosynthesis. Its function is as follows. Multifunctional diterpene synthase; part of the 2 gene clusters that mediate the biosynthesis of fusicoccins, diterpene glucosides that display phytohormone-like activity and function as potent activators of plasma membrane H(+)-ATPases in plants by modifying 14-3-3 proteins and cause the plant disease constriction canker. The first step in the pathway is performed by the fusicoccadiene synthase PaFS that possesses both prenyl transferase and terpene cyclase activity, converting isopentenyl diphosphate and dimethylallyl diphosphate into geranylgeranyl diphosphate (GGDP) and successively converting GGDP into fusicocca-2,10(14)-diene, a precursor for fusicoccin H. Fusicoccadiene synthase is an allosteric enzyme for GGPP cyclization that generates 64% fusicoccadiene, 9% delta-araneosene, and one additional unidentified diterpene product, when incubated with GGPP. In the absence of isopentenyl diphosphate (IPP), PaFS can also solvolyze the shorter chain geranyl diphosphate (GPP) and farnesyl diphosphate (FPP) as alternative substrates to yield predominantly acyclic products. FPP is converted to farnesol (60.5%), nerolidol (14.0%), and farnesene (14.0%), while GPP is converted to a mixture of geraniol (59.5%) and linalool (35.0%). The second step is the oxidation at the C-8 position by the cytochrome P450 monooxygenase PaP450-2 to yield fusicocca-2,10(14)-diene-8-beta-ol. The cytochrome P450 monooxygenase PaP450-1 then catalyzes the hydroxylation at the C-16 position to produce fusicocca-2,10(14)-diene-8-beta,16-diol. The dioxygenase fc-dox then catalyzes the 16-oxydation of fusicocca-2,10(14)-diene-8-beta,16-diol to yield an aldehyde (8-beta-hydroxyfusicocca-1,10(14)-dien-16-al). The short-chain dehydrogenase/reductase fc-sdr catalyzes the reduction of the aldehyde to yield fusicocca-1,10(14)-diene-8-beta,16-diol. The next step is the hydroxylation at C-9 performed by the cytochrome P450 monooxygenase PaP450-3 that leads to fusicoccin H aglycon which is glycosylated to fusicoccin H by the O-glycosyltransferase PAGT. Hydroxylation at C-12 by the cytochrome P450 monooxygenase PaP450-4 leads then to the production of fusicoccin Q and is followed by methylation by the O-methyltransferase PAMT to yield fusicoccin P. Fusicoccin P is further converted to fusicoccin J via prenylation by the O-glucose prenyltransferase PaPT. Cytochrome P450 monooxygenase PaP450-5 then performs hydroxylation at C-19 to yield dideacetyl-fusicoccin A which is acetylated to 3'-O-deacetyl-fusicoccin A by the O-acetyltransferase PaAT-2. Finally, a another acetylation by the O-acetyltransferase PaAT-1 yields fusicoccin A. The sequence is that of Fusicoccadiene synthase from Phomopsis amygdali (Fusicoccum amygdali).